Consider the following 120-residue polypeptide: SAGA-associated factor 11 (120 aa).

A compositionally biased stretch (low complexity) spans 40–60; it reads SLLNSSNSNTNSNTNGTIASN. A disordered region spans residues 40–82; the sequence is SLLNSSNSNTNSNTNGTIASNGGNGTTSDENNEIENSTIQDKS. The segment at 93–114 adopts an SGF11-type zinc-finger fold; that stretch reads FRCLNCGRNIAGGRFASHISKC.

Belongs to the SGF11 family. As to quaternary structure, component of the 1.8 MDa SAGA transcription coactivator-HAT complex. SAGA is built of 5 distinct domains with specialized functions. Within the SAGA complex, SUS1, SGF11, SGF73 and UBP8 form an additional subcomplex of SAGA called the DUB module (deubiquitination module). Interacts directly with SGF73, SUS1 and UBP8.

It localises to the nucleus. In terms of biological role, functions as a component of the transcription regulatory histone acetylation (HAT) complex SAGA. At the promoters, SAGA is required for recruitment of the basal transcription machinery. It influences RNA polymerase II transcriptional activity through different activities such as TBP interaction and promoter selectivity, interaction with transcription activators, and chromatin modification through histone acetylation and deubiquitination. SAGA acetylates nucleosomal histone H3 to some extent (to form H3K9ac, H3K14ac, H3K18ac and H3K23ac). SAGA interacts with DNA via upstream activating sequences (UASs). Involved in transcriptional regulation of a subset of SAGA-regulated genes. Within the SAGA complex, participates in a subcomplex, that specifically deubiquitinates histones H2B. The polypeptide is SAGA-associated factor 11 (Candida albicans (strain SC5314 / ATCC MYA-2876) (Yeast)).